The chain runs to 383 residues: Protein delta homolog 1 (383 aa).

The N-terminal stretch at 1-23 (MIATGALLRVLLLLLAFGHSTYG) is a signal peptide. EGF-like domains follow at residues 24-55 (AECD…PLCE), 59-86 (TSPG…KFCE), 88-125 (DIRA…KDCQ), 127-168 (KAGP…NFCE), 170-206 (VTNS…KTCS), and 208-245 (PVSN…PTCA). Over 24 to 306 (AECDPACDPQ…PLLTEGQAIC (283 aa)) the chain is Extracellular. Intrachain disulfides connect cysteine 26–cysteine 37, cysteine 30–cysteine 43, cysteine 45–cysteine 54, cysteine 63–cysteine 68, cysteine 76–cysteine 85, cysteine 92–cysteine 103, cysteine 97–cysteine 113, cysteine 115–cysteine 124, cysteine 131–cysteine 144, cysteine 138–cysteine 156, cysteine 158–cysteine 167, cysteine 174–cysteine 185, cysteine 179–cysteine 194, cysteine 196–cysteine 205, cysteine 212–cysteine 223, cysteine 217–cysteine 233, and cysteine 235–cysteine 244. The helical transmembrane segment at 307–327 (FTILGVLTSLVVLGTVAIVFL) threads the bilayer. The Cytoplasmic segment spans residues 328 to 383 (NKCEAWVSNLRYNHMLRKKKNLLLQYNSGEELAVNIIFPEKIDMTTFNKEAGDEDI).

As to quaternary structure, monomer. Interacts with SH3RF2. Glycosylated. In terms of tissue distribution, pancreas and adrenal glands (at protein level).

Its subcellular location is the membrane. It is found in the cytoplasm. In terms of biological role, may have a role in neuroendocrine differentiation. Inhibits adipocyte differentiation. This is Protein delta homolog 1 (Dlk1) from Rattus norvegicus (Rat).